Reading from the N-terminus, the 220-residue chain is Adenylate kinase (220 aa).

10 to 15 (GAGKGT) is an ATP binding site. An NMP region spans residues 30-59 (STGDLFRANISQQTELGKLAKSYMDEGNLV). Residues Thr-31, Arg-36, 57-59 (NLV), 85-88 (GFPR), and Gln-92 each bind AMP. Positions 126 to 164 (GRRICRNDSAHVFHVSYKPPKQEGVCDVCGGELYQRDDD) are LID. ATP-binding positions include Arg-127 and 137–138 (VF). AMP contacts are provided by Arg-161 and Arg-172. An ATP-binding site is contributed by Gly-200.

Belongs to the adenylate kinase family. As to quaternary structure, monomer.

The protein resides in the cytoplasm. It catalyses the reaction AMP + ATP = 2 ADP. It functions in the pathway purine metabolism; AMP biosynthesis via salvage pathway; AMP from ADP: step 1/1. Its function is as follows. Catalyzes the reversible transfer of the terminal phosphate group between ATP and AMP. Plays an important role in cellular energy homeostasis and in adenine nucleotide metabolism. This Streptomyces avermitilis (strain ATCC 31267 / DSM 46492 / JCM 5070 / NBRC 14893 / NCIMB 12804 / NRRL 8165 / MA-4680) protein is Adenylate kinase.